Here is a 353-residue protein sequence, read N- to C-terminus: Rhodopsin (353 aa).

Topologically, residues 1-36 (MNGTEGDNFYVPFSNKTGLARSPYEYPQYYLAEPWK) are extracellular. 2 N-linked (GlcNAc...) asparagine glycosylation sites follow: N2 and N15. Residues 37–61 (YSALAAYMFFLILVGFPVNFLTLFV) traverse the membrane as a helical segment. The Cytoplasmic segment spans residues 62-73 (TVQHKKLRTPLN). The chain crosses the membrane as a helical span at residues 74–96 (YILLNLAMANLFMVLFGFTVTMY). The Extracellular portion of the chain corresponds to 97 to 110 (TSMNGYFVFGPTMC). C110 and C187 are joined by a disulfide. A helical membrane pass occupies residues 111–133 (SIEGFFATLGGEVALWSLVVLAI). The short motif at 134 to 136 (ERY) is the 'Ionic lock' involved in activated form stabilization element. Topologically, residues 134 to 152 (ERYIVICKPMGNFRFGNTH) are cytoplasmic. Residues 153–173 (AIMGVAFTWIMALACAAPPLV) traverse the membrane as a helical segment. Topologically, residues 174–202 (GWSRYIPEGMQCSCGPDYYTLNPNFNNES) are extracellular. A helical membrane pass occupies residues 203-224 (YVVYMFVVHFLVPFVIIFFCYG). Residues 225-252 (RLLCTVKEAAAAQQESASTQKAEKEVTR) lie on the Cytoplasmic side of the membrane. A helical membrane pass occupies residues 253–274 (MVVLMVIGFLVCWVPYASVAFY). Residues 275–286 (IFTHQGSDFGAT) are Extracellular-facing. The chain crosses the membrane as a helical span at residues 287–308 (FMTLPAFFAKSSALYNPVIYIL). At K296 the chain carries N6-(retinylidene)lysine. The Cytoplasmic segment spans residues 309–353 (MNKQFRNCMITTLCCGKNPLGDDESGASTSKTEVSSVSTSPVSPA). The segment at 330-353 (DDESGASTSKTEVSSVSTSPVSPA) is disordered. The span at 336–353 (STSKTEVSSVSTSPVSPA) shows a compositional bias: low complexity.

It belongs to the G-protein coupled receptor 1 family. Opsin subfamily. Post-translationally, phosphorylated on some or all of the serine and threonine residues present in the C-terminal region. Contains one covalently linked retinal chromophore. In terms of tissue distribution, short photoreceptor cells.

It is found in the membrane. Its subcellular location is the cell projection. The protein resides in the cilium. It localises to the photoreceptor outer segment. Its function is as follows. Photoreceptor required for image-forming vision at low light intensity. While most salt water fish species use retinal as chromophore, most freshwater fish use 3-dehydroretinal, or a mixture of retinal and 3-dehydroretinal. Light-induced isomerization of 11-cis to all-trans retinal triggers a conformational change that activates signaling via G-proteins. Subsequent receptor phosphorylation mediates displacement of the bound G-protein alpha subunit by arrestin and terminates signaling. The protein is Rhodopsin (RHO) of Lethenteron camtschaticum (Japanese lamprey).